A 106-amino-acid polypeptide reads, in one-letter code: Follitropin subunit beta (106 aa).

6 disulfide bridges follow: cysteine 1/cysteine 49, cysteine 15/cysteine 64, cysteine 18/cysteine 102, cysteine 26/cysteine 80, cysteine 30/cysteine 82, and cysteine 85/cysteine 92. 2 N-linked (GlcNAc...) asparagine glycosylation sites follow: asparagine 5 and asparagine 22.

It belongs to the glycoprotein hormones subunit beta family. Heterodimer. The active follitropin is a heterodimer composed of an alpha chain/CGA shared with other hormones and a unique beta chain/FSHB shown here.

The protein resides in the secreted. Functionally, together with the alpha chain CGA constitutes follitropin, the follicle-stimulating hormone, and provides its biological specificity to the hormone heterodimer. Binds FSHR, a G protein-coupled receptor, on target cells to activate downstream signaling pathways. Follitropin is involved in follicle development and spermatogenesis in reproductive organs. In Struthio camelus (Common ostrich), this protein is Follitropin subunit beta (FSHB).